The sequence spans 334 residues: Protein CapI (334 aa).

Serine 126 contributes to the substrate binding site. Tyrosine 151 functions as the Proton acceptor in the catalytic mechanism.

Belongs to the NAD(P)-dependent epimerase/dehydratase family.

The protein operates within capsule biogenesis; capsule polysaccharide biosynthesis. In terms of biological role, required for the biosynthesis of type 1 capsular polysaccharide. In Staphylococcus aureus, this protein is Protein CapI (capI).